Consider the following 483-residue polypeptide: Zinc finger CCCH domain-containing protein 25 (483 aa).

The C3H1-type zinc finger occupies 157–184 (RNRAHICSFFIRGECTRGDECPYRHEMP). Residues 228–301 (RTLYVGGLNS…QRLKLTWGRP (74 aa)) form the RRM domain. Disordered regions lie at residues 298-317 (WGRP…QGSV) and 336-483 (PPML…GSSQ). A compositionally biased stretch (pro residues) spans 336–351 (PPMLQYYMHPPPPQPP). The segment covering 370–380 (SSSKESGSSTS) has biased composition (low complexity). Positions 381–391 (DNRGASSSSYT) are enriched in polar residues. Composition is skewed to low complexity over residues 392–401 (MPPHGHYPQH) and 409–423 (YGGY…YPPY). Over residues 438 to 459 (QPGPGSRPNPPHPSSVSAPPPD) the composition is skewed to pro residues. The span at 460 to 476 (SVSAAPSGSSQQSADAA) shows a compositional bias: low complexity.

This Arabidopsis thaliana (Mouse-ear cress) protein is Zinc finger CCCH domain-containing protein 25.